A 554-amino-acid polypeptide reads, in one-letter code: Transcription factor 7-like 1-A (554 aa).

The segment covering 1 to 11 has biased composition (gly residues); sequence MPQLNSGGGDE. Positions 1–61 are interaction with CTNNB1-A; that stretch reads MPQLNSGGGD…SENHSSDSDS (61 aa). 3 disordered regions span residues 1-73, 183-213, and 391-475; these read MPQL…REAF, GTPP…PYYP, and WSAR…LTTK. 2 stretches are compositionally biased toward basic and acidic residues: residues 17-32 and 52-73; these read ELIR…EKSP and SENH…REAF. Residues 109–312 form an interaction with AES and TLE4-A region; it reads LGGHYLPNGA…SPNLHTKSNM (204 aa). Positions 324–392 form a DNA-binding region, HMG box; it reads IKKPLNAFML…LHSQLYPSWS (69 aa). Residues 407–416 are compositionally biased toward basic and acidic residues; sequence KQSPEMETHT. The interaction with CTBP-B stretch occupies residues 408 to 554; it reads QSPEMETHTK…PLSLVTKSSD (147 aa). A compositionally biased stretch (low complexity) spans 445 to 464; the sequence is SPATPSAALASPAAPAATHS. Residues 465–474 show a composition bias toward polar residues; it reads EQAQPLSLTT.

It belongs to the TCF/LEF family. Interacts with csnk1e, ctnnb1-A, ctbp-B, dact1-A and gsk3b. May interact with ase and tle4-A. Phosphorylated. Phosphorylation by csnk1e promotes binding to ctnnb1-A while phosphorylation by gsk3b may reverse this effect.

Its subcellular location is the cytoplasm. It is found in the nucleus. In terms of biological role, participates in the Wnt signaling pathway. Binds to DNA and acts as a repressor in the absence of ctnnb1-A and possibly ctnnb1-B, and as an activator in the presence of these proteins. Required early in development for the establishment of the dorsal body axis in response to maternal Wnt signaling. Also required during development of the CNS for the establishment of dorsal-ventral patterning in the prospective diencephalon. In Xenopus laevis (African clawed frog), this protein is Transcription factor 7-like 1-A (tcf7l1-a).